A 192-amino-acid chain; its full sequence is Imidazole glycerol phosphate synthase subunit HisH (192 aa).

The Glutamine amidotransferase type-1 domain occupies 1 to 192 (MIAIIDYGLG…QALKGGFIND (192 aa)). Cys-77 functions as the Nucleophile in the catalytic mechanism. Active-site residues include His-169 and Glu-171.

As to quaternary structure, heterodimer of HisH and HisF.

The protein localises to the cytoplasm. It catalyses the reaction 5-[(5-phospho-1-deoxy-D-ribulos-1-ylimino)methylamino]-1-(5-phospho-beta-D-ribosyl)imidazole-4-carboxamide + L-glutamine = D-erythro-1-(imidazol-4-yl)glycerol 3-phosphate + 5-amino-1-(5-phospho-beta-D-ribosyl)imidazole-4-carboxamide + L-glutamate + H(+). It carries out the reaction L-glutamine + H2O = L-glutamate + NH4(+). It participates in amino-acid biosynthesis; L-histidine biosynthesis; L-histidine from 5-phospho-alpha-D-ribose 1-diphosphate: step 5/9. Functionally, IGPS catalyzes the conversion of PRFAR and glutamine to IGP, AICAR and glutamate. The HisH subunit catalyzes the hydrolysis of glutamine to glutamate and ammonia as part of the synthesis of IGP and AICAR. The resulting ammonia molecule is channeled to the active site of HisF. The sequence is that of Imidazole glycerol phosphate synthase subunit HisH from Staphylococcus epidermidis (strain ATCC 12228 / FDA PCI 1200).